The primary structure comprises 381 residues: Creatine kinase B-type (381 aa).

Ser4 bears the Phosphoserine mark. The region spanning 11-98 (KLRFPAEDEF…FDPIIEDRHG (88 aa)) is the Phosphagen kinase N-terminal domain. Thr35 bears the Phosphothreonine mark. Lys45 is covalently cross-linked (Glycyl lysine isopeptide (Lys-Gly) (interchain with G-Cter in ubiquitin)). Val72 is a binding site for creatine. Over residues 96-110 (RHGGYKPSDEHKTDL) the composition is skewed to basic and acidic residues. Residues 96 to 123 (RHGGYKPSDEHKTDLNPDNLQGGDDLDP) are disordered. Residues Lys101 and Lys107 each participate in a glycyl lysine isopeptide (Lys-Gly) (interchain with G-Cter in ubiquitin) cross-link. Tyr125 carries the phosphotyrosine modification. One can recognise a Phosphagen kinase C-terminal domain in the interval 125-367 (YVLSSRVRTG…KLLIEMEQRL (243 aa)). ATP is bound by residues 128 to 132 (SSRVR), Arg130, Arg132, and His191. The tract at residues 130–138 (RVRTGRSIR) is internal MTS-like signal. Ser199 carries the phosphoserine modification. A creatine-binding site is contributed by Glu232. ATP is bound at residue Arg236. Tyr269 bears the 3'-nitrotyrosine mark. Residue Ser285 participates in creatine binding. Residues Arg292, 292–296 (RAGVH), Arg320, 320–325 (RGTGGV), and Asp335 contribute to the ATP site. Thr322 is subject to Phosphothreonine. Residue Lys381 forms a Glycyl lysine isopeptide (Lys-Gly) (interchain with G-Cter in ubiquitin) linkage.

The protein belongs to the ATP:guanido phosphotransferase family. As to quaternary structure, dimer of identical or non-identical chains, which can be either B (brain type) or M (muscle type). With MM being the major form in skeletal muscle and myocardium, MB existing in myocardium, and BB existing in many tissues, especially brain. Interacts with SLC12A6 (via C-terminus); the interaction may be required for SLC12A6 potassium-chloride cotransport activity. Ubiquitinated by the ECS(ASB9) complex, leading to its degradation by the proteasome.

It localises to the cytoplasm. Its subcellular location is the cytosol. The protein localises to the mitochondrion. It is found in the cell membrane. It catalyses the reaction creatine + ATP = N-phosphocreatine + ADP + H(+). Reversibly catalyzes the transfer of phosphate between ATP and various phosphogens (e.g. creatine phosphate). Creatine kinase isoenzymes play a central role in energy transduction in tissues with large, fluctuating energy demands, such as skeletal muscle, heart, brain and spermatozoa. Acts as a key regulator of adaptive thermogenesis as part of the futile creatine cycle: localizes to the mitochondria of thermogenic fat cells and acts by mediating phosphorylation of creatine to initiate a futile cycle of creatine phosphorylation and dephosphorylation. During the futile creatine cycle, creatine and N-phosphocreatine are in a futile cycle, which dissipates the high energy charge of N-phosphocreatine as heat without performing any mechanical or chemical work. The protein is Creatine kinase B-type (CKB) of Sus scrofa (Pig).